The chain runs to 154 residues: Myoglobin (154 aa).

A Globin domain is found at 2–148 (GLSDGEWQQV…FRNDIAAKYK (147 aa)). S4 carries the phosphoserine modification. A nitrite-binding site is contributed by H65. O2 is bound at residue H65. H94 is a binding site for heme b.

It belongs to the globin family. As to quaternary structure, monomeric.

It is found in the cytoplasm. Its subcellular location is the sarcoplasm. The enzyme catalyses Fe(III)-heme b-[protein] + nitric oxide + H2O = Fe(II)-heme b-[protein] + nitrite + 2 H(+). It catalyses the reaction H2O2 + AH2 = A + 2 H2O. Functionally, monomeric heme protein which primary function is to store oxygen and facilitate its diffusion within muscle tissues. Reversibly binds oxygen through a pentacoordinated heme iron and enables its timely and efficient release as needed during periods of heightened demand. Depending on the oxidative conditions of tissues and cells, and in addition to its ability to bind oxygen, it also has a nitrite reductase activity whereby it regulates the production of bioactive nitric oxide. Under stress conditions, like hypoxia and anoxia, it also protects cells against reactive oxygen species thanks to its pseudoperoxidase activity. The chain is Myoglobin (MB) from Equus quagga burchellii (Burchell's zebra).